Consider the following 255-residue polypeptide: Small ribosomal subunit protein uS2 (255 aa).

Positions 231-255 (RLQTGAEEEFSTEGEEVVEETPAEA) are disordered. A compositionally biased stretch (acidic residues) spans 236 to 255 (AEEEFSTEGEEVVEETPAEA).

It belongs to the universal ribosomal protein uS2 family.

This chain is Small ribosomal subunit protein uS2, found in Citrifermentans bemidjiense (strain ATCC BAA-1014 / DSM 16622 / JCM 12645 / Bem) (Geobacter bemidjiensis).